Here is a 235-residue protein sequence, read N- to C-terminus: Isopentenyl-diphosphate Delta-isomerase I (235 aa).

Lys-38 contacts substrate. The Mg(2+) site is built by His-42 and His-54. The Nudix hydrolase domain maps to Leu-52–Leu-204. Residues Arg-73 and Lys-77 each contribute to the substrate site. The active site involves Cys-89. Ser-90 is a substrate binding site. Mg(2+) is bound by residues Glu-149 and Glu-151. The active site involves Glu-151.

The protein belongs to the IPP isomerase type 1 family. It depends on Mg(2+) as a cofactor.

The catalysed reaction is isopentenyl diphosphate = dimethylallyl diphosphate. It participates in isoprenoid biosynthesis; dimethylallyl diphosphate biosynthesis; dimethylallyl diphosphate from isopentenyl diphosphate: step 1/1. It functions in the pathway porphyrin-containing compound metabolism; chlorophyll biosynthesis. In terms of biological role, catalyzes the 1,3-allylic rearrangement of the homoallylic substrate isopentenyl (IPP) to its highly electrophilic allylic isomer, dimethylallyl diphosphate (DMAPP). This is Isopentenyl-diphosphate Delta-isomerase I (IPI1) from Camptotheca acuminata (Happy tree).